The chain runs to 88 residues: Arminin 7965 (88 aa).

A signal peptide spans 1–18; sequence MKTVFAILFLTFIAFTYA. Positions 19–57 are excised as a propeptide; sequence KSYEDVKEEIKNEVEREIFEDLEEESDVLDSNVRELNDA. An Alanine amide modification is found at A85.

It belongs to the arminin family. Expressed in entodermal epithelium along the body column.

The protein localises to the secreted. The protein resides in the target cell membrane. Antimicrobial peptide with a broad-spectrum antimicrobial activity. Keeps its antibacterial activity under a wide range of salt concentrations that mimic physiological conditions of human blood, which is surprising, since Hydra is an obligate freshwater animal with nearly no salt tolerance. Does not affect red blood cells. The polypeptide is Arminin 7965 (Hydra vulgaris (Hydra)).